The sequence spans 640 residues: Epithelial sodium channel subunit beta (640 aa).

Residues 1 to 50 (MHVKKYLLKGLHRLQKGPGYTYKELLVWYCDNTNTHGPKRIICEGPKKKA) are Cytoplasmic-facing. The chain crosses the membrane as a helical span at residues 51-71 (MWFLLTLLFAALVCWQWGIFI). The Extracellular segment spans residues 72 to 532 (RTYLSWEVSV…GGQFGFWMGG (461 aa)). Intrachain disulfides connect C98-C272, C184-C189, C196-C203, C249-C256, C361-C448, C386-C444, C390-C440, C399-C426, and C401-C415. The N-linked (GlcNAc...) asparagine glycan is linked to N260. The chain crosses the membrane as a helical span at residues 533 to 553 (SVLCLIEFGEIIIDFVWITII). Topologically, residues 554–640 (KLVALAKSLR…IESDSEGDAI (87 aa)) are cytoplasmic. Residues 590–640 (FQPDTAPRSPNTGPYPSEQALPIPGTPPPNYDSLRLQPLDVIESDSEGDAI) form a disordered region. Positions 616–620 (PPPNY) match the PY motif; recruits WW domain-containing proteins and is thereby required for ubiquitination and inhibition of the channel by NEDD4 and NEDD4L motif. Positions 631–640 (IESDSEGDAI) are enriched in acidic residues. Residues S633 and S635 each carry the phosphoserine modification.

The protein belongs to the amiloride-sensitive sodium channel (TC 1.A.6) family. SCNN1B subfamily. As to quaternary structure, component of the heterotrimeric epithelial sodium channel (ENaC) composed of an alpha/SCNN1A, a beta/SCNN1B and a gamma/SCNN1G subunit. An additional delta/SCNN1D subunit can replace the alpha/SCNN1A subunit to form an alternative channel with specific properties. Interacts with WWP1 (via WW domains). Interacts with WWP2 (via WW domains); inhibits the channel. Interacts with the full-length immature form of PCSK9 (pro-PCSK9); inhibits ENaC by promoting its proteasomal degradation. Interacts (N-glycosylated) with BPIFA1; the interaction is direct and inhibits the proteolytic processing of SCNN1A and SCNN1G and the activation of ENaC. Ubiquitinated. Can be ubiquitinated at multiple sites and undergo monoubiquitination and polyubiquitination. Ubiquitination by NEDD4 or NEDD4L inhibits the ENaC channel through endocytosis, intracellular retention and degradation of its individual subunits. However, some studies could not confirm the ubiquitination of this subunit of the ENaC. In terms of processing, phosphorylated on serine and threonine residues. Aldosterone and insulin increase the basal level of phosphorylation. Post-translationally, N-glycosylated. N-glycosylation is required for interaction with BPIFA1. In terms of tissue distribution, detected in placenta, lung and kidney. Expressed in kidney (at protein level).

The protein resides in the apical cell membrane. It is found in the cytoplasmic vesicle membrane. The catalysed reaction is Na(+)(in) = Na(+)(out). With respect to regulation, originally identified and characterized by its inhibition by the diuretic drug amiloride. In terms of biological role, this is one of the three pore-forming subunits of the heterotrimeric epithelial sodium channel (ENaC), a critical regulator of sodium balance and fluid homeostasis. ENaC operates in epithelial tissues, where it mediates the electrodiffusion of sodium ions from extracellular fluid through the apical membrane of cells, with water following osmotically. It plays a key role in maintaining sodium homeostasis through electrogenic sodium reabsorption in the kidneys. Additionally, ENaC is essential for airway surface liquid homeostasis, which is crucial for proper mucus clearance. The polypeptide is Epithelial sodium channel subunit beta (Homo sapiens (Human)).